We begin with the raw amino-acid sequence, 667 residues long: Cysteine-rich receptor-like protein kinase 11 (667 aa).

The first 24 residues, 1 to 24 (MKQRSLFSVLCFFFISFGVASVSA), serve as a signal peptide directing secretion. Gnk2-homologous domains are found at residues 25-129 (QTCT…NTSF) and 135-248 (LNPR…LYTY). The Extracellular portion of the chain corresponds to 25 to 292 (QTCTTDKGTF…SKGISAGVVV (268 aa)). N-linked (GlcNAc...) asparagine glycosylation is found at N37, N54, N64, N106, N126, N150, and N254. Pro residues predominate over residues 259-268 (SPPPEPPVTV). Residues 259 to 282 (SPPPEPPVTVPQPAGDQDNPTNND) form a disordered region. The N-linked (GlcNAc...) asparagine glycan is linked to N281. A helical transmembrane segment spans residues 293–313 (AITVPTVIAILILLVLGFVLF). The Cytoplasmic portion of the chain corresponds to 314–667 (RRRKSYQRTK…YTSKSSSFSS (354 aa)). The Protein kinase domain maps to 350–629 (FSTSNKLGEG…IILMLTSNTI (280 aa)). ATP is bound by residues 356–364 (LGEGGFGAV) and K378. Position 423 is a phosphotyrosine (Y423). D475 serves as the catalytic Proton acceptor. S479 is modified (phosphoserine). T515 bears the Phosphothreonine mark. Y523 carries the post-translational modification Phosphotyrosine.

This sequence belongs to the protein kinase superfamily. Ser/Thr protein kinase family. CRK subfamily. Detected in root, stem, leaf and flower.

The protein localises to the membrane. The enzyme catalyses L-seryl-[protein] + ATP = O-phospho-L-seryl-[protein] + ADP + H(+). It carries out the reaction L-threonyl-[protein] + ATP = O-phospho-L-threonyl-[protein] + ADP + H(+). The sequence is that of Cysteine-rich receptor-like protein kinase 11 (CRK11) from Arabidopsis thaliana (Mouse-ear cress).